We begin with the raw amino-acid sequence, 566 residues long: Endoglucanase G (566 aa).

The N-terminal stretch at M1 to A30 is a signal peptide. E226 acts as the Proton donor in catalysis. Catalysis depends on E381, which acts as the Nucleophile. A disordered region spans residues G473–S494. Low complexity predominate over residues T474–S494. In terms of domain architecture, Dockerin spans P497–H564.

Belongs to the glycosyl hydrolase 5 (cellulase A) family.

It catalyses the reaction Endohydrolysis of (1-&gt;4)-beta-D-glucosidic linkages in cellulose, lichenin and cereal beta-D-glucans.. Functionally, this enzyme catalyzes the endohydrolysis of 1,4-beta-glucosidic linkages in cellulose, lichenin and cereal beta-D-glucans. This is Endoglucanase G (celG) from Acetivibrio thermocellus (strain ATCC 27405 / DSM 1237 / JCM 9322 / NBRC 103400 / NCIMB 10682 / NRRL B-4536 / VPI 7372) (Clostridium thermocellum).